The sequence spans 145 residues: uncharacterized protein (145 aa).

Substrate is bound by residues Val-97 and Asn-121.

The protein belongs to the D-isomer specific 2-hydroxyacid dehydrogenase family. FDH subfamily.

This is an uncharacterized protein from Saccharomyces cerevisiae (strain ATCC 204508 / S288c) (Baker's yeast).